A 202-amino-acid polypeptide reads, in one-letter code: MAWELLSVIGIIAFAVSGAIVAMEEEYDILGVYILGIVTAFGGGAIRNLLIGVPVSALWEQGAYFQIALLSITIVFLFPKLLLKHWNKWGNLSDAIGLAAFAIQGALYAVKMGHPLSAVIVAAVLTGSGGGIIRDLLAGRKPLVLKAEIYAVWAALGGLIVGLGWLGNSFGLYVLFFVLVVCRVCSYMFNWKLPNRSFRLDN.

Transmembrane regions (helical) follow at residues 3–23, 26–46, 63–83, 90–110, 113–133, and 160–180; these read WELL…IVAM, EYDI…GGAI, AYFQ…KLLL, GNLS…LYAV, GHPL…GGII, and IVGL…FVLV.

The protein belongs to the UPF0126 family.

Its subcellular location is the cell membrane. The sequence is that of UPF0126 membrane protein YvgT (yvgT) from Bacillus subtilis (strain 168).